Here is a 427-residue protein sequence, read N- to C-terminus: Trigger factor (427 aa).

Residues 163 to 248 (GDTVVIDFVG…IHEVKAKEVP (86 aa)) enclose the PPIase FKBP-type domain.

This sequence belongs to the FKBP-type PPIase family. Tig subfamily.

Its subcellular location is the cytoplasm. It carries out the reaction [protein]-peptidylproline (omega=180) = [protein]-peptidylproline (omega=0). In terms of biological role, involved in protein export. Acts as a chaperone by maintaining the newly synthesized protein in an open conformation. Functions as a peptidyl-prolyl cis-trans isomerase. The protein is Trigger factor of Streptococcus pneumoniae (strain 70585).